Reading from the N-terminus, the 290-residue chain is Zinc finger matrin-type protein 3 (290 aa).

2 Matrin-type zinc fingers span residues 70 to 100 (LFCK…KLRN) and 148 to 178 (DYCK…RLRL). Disordered stretches follow at residues 182 to 203 (QSHS…EGSE) and 266 to 290 (ESKQ…GYVQ). Residues 246–276 (FYCSMCNVGAGEEVEFRQHLESKQHKSKVSE) form a Matrin-type 3 zinc finger. Basic and acidic residues predominate over residues 266-283 (ESKQHKSKVSEQRYRSEM).

Interacts with dsRNA. As to expression, constitutively expressed in brain and testis. Also expressed in lung, kidney and spleen after whole body gamma irradiation.

The protein localises to the nucleus. Its subcellular location is the nucleolus. Acts as a bona fide target gene of p53/TP53. May play a role in the TP53-dependent growth regulatory pathway. May contribute to TP53-mediated apoptosis by regulation of TP53 expression and translocation to the nucleus and nucleolus. This is Zinc finger matrin-type protein 3 from Mus musculus (Mouse).